The primary structure comprises 693 residues: Elongation factor G (693 aa).

The tr-type G domain maps to 8–283; it reads NRIRNIGIAA…AVIDYLPAPT (276 aa). GTP-binding positions include 17 to 24, 81 to 85, and 135 to 138; these read AHIDAGKT, DTPGH, and NKMD.

The protein belongs to the TRAFAC class translation factor GTPase superfamily. Classic translation factor GTPase family. EF-G/EF-2 subfamily.

It localises to the cytoplasm. Its function is as follows. Catalyzes the GTP-dependent ribosomal translocation step during translation elongation. During this step, the ribosome changes from the pre-translocational (PRE) to the post-translocational (POST) state as the newly formed A-site-bound peptidyl-tRNA and P-site-bound deacylated tRNA move to the P and E sites, respectively. Catalyzes the coordinated movement of the two tRNA molecules, the mRNA and conformational changes in the ribosome. The chain is Elongation factor G from Wolinella succinogenes (strain ATCC 29543 / DSM 1740 / CCUG 13145 / JCM 31913 / LMG 7466 / NCTC 11488 / FDC 602W) (Vibrio succinogenes).